A 129-amino-acid polypeptide reads, in one-letter code: Cocaine- and amphetamine-regulated transcript protein (129 aa).

An N-terminal signal peptide occupies residues 1 to 27; the sequence is MESSRLRLLPVLGAALLLLLPLLGAGA. Tyr41 is subject to Phosphotyrosine. Residue Ser48 is modified to Phosphoserine. 3 disulfide bridges follow: Cys95–Cys113, Cys101–Cys121, and Cys115–Cys128.

The protein belongs to the CART family. In terms of tissue distribution, neuroendocrine tissues. Predominantly expressed in the hypothalamus, pituitary, and longitudinal muscle-myenteric plexus. Abundant expression is also seen in the midbrain/thalamus and eye. A lower level expression is seen in the other brain regions and adrenal.

The protein resides in the secreted. In terms of biological role, satiety factor closely associated with the actions of leptin and neuropeptide y; this anorectic peptide inhibits both normal and starvation-induced feeding and completely blocks the feeding response induced by neuropeptide Y and regulated by leptin in the hypothalamus. The chain is Cocaine- and amphetamine-regulated transcript protein (Cartpt) from Rattus norvegicus (Rat).